The following is a 224-amino-acid chain: MKKLLLIAATSATMLSSTLSFADGMDNEWYLRIGAGAAMFNKEKDEATSVKLKSNMTVSVDLGIGYYFSKNFRTDLTLGTIIGGKLKKSGTATNVPFSGTNVSVSYKPTITRLLINGYVDLTNFNIFDVFAGAGVGPALVKEKITYNGITGLASTTKNRTNISYKLTLGTSAQIADDVKVELAYSWINDGKAKSKNVVYQGQKVQIGGMRYQSHNLTASIRFDI.

Positions 1–22 (MKKLLLIAATSATMLSSTLSFA) are cleaved as a signal peptide.

The sequence is that of Putative adhesin A1E_05320 from Rickettsia canadensis (strain McKiel).